The primary structure comprises 742 residues: uncharacterized protein (742 aa).

The interval 167-471 is disordered; that stretch reads GIVPPEPWGH…AAGAAGGGGA (305 aa). Pro residues predominate over residues 205 to 218; the sequence is PAPPPSLFAPPPPS. 2 stretches are compositionally biased toward polar residues: residues 318–331 and 358–368; these read SPATSNEISSNAVS and GSPQTLSTAPS. A compositionally biased stretch (pro residues) spans 386-401; it reads TAGPAAPPTTGGPPAP. The span at 421 to 432 shows a compositional bias: low complexity; sequence PLSGGVPGGAVP. Residues 433–447 show a composition bias toward pro residues; the sequence is LGPPPTPPPAAPVTT. Positions 448 to 464 are enriched in low complexity; sequence PPLASGAPVAPTGAAAG.

In terms of biological role, may be involved in the ESX-1 / type VII specialized secretion system (T7SS), which exports several proteins including EsxA and EsxB. Involved in DNA conjugation in the recipient strain. This is an uncharacterized protein from Mycolicibacterium smegmatis (strain MKD8) (Mycobacterium smegmatis).